A 348-amino-acid chain; its full sequence is Phosphate acyltransferase (348 aa).

Belongs to the PlsX family. Homodimer. Probably interacts with PlsY.

It is found in the cytoplasm. It carries out the reaction a fatty acyl-[ACP] + phosphate = an acyl phosphate + holo-[ACP]. It functions in the pathway lipid metabolism; phospholipid metabolism. Catalyzes the reversible formation of acyl-phosphate (acyl-PO(4)) from acyl-[acyl-carrier-protein] (acyl-ACP). This enzyme utilizes acyl-ACP as fatty acyl donor, but not acyl-CoA. This chain is Phosphate acyltransferase, found in Oenococcus oeni (strain ATCC BAA-331 / PSU-1).